Consider the following 718-residue polypeptide: Probable GTP diphosphokinase RSH2, chloroplastic (718 aa).

A chloroplast-targeting transit peptide spans Met-1–Arg-68. The disordered stretch occupies residues Tyr-9 to Arg-48. Residues Ser-19–Ala-39 are compositionally biased toward low complexity. The HD domain maps to Tyr-243–Met-347.

Belongs to the RelA/SpoT family.

The protein localises to the plastid. The protein resides in the chloroplast. The enzyme catalyses GTP + ATP = guanosine 3'-diphosphate 5'-triphosphate + AMP. In terms of biological role, probable ppGpp (guanosine 3'-diphosphate 5'-diphosphate) synthetase that may be involved in a rapid plant ppGpp-mediated response to pathogens and other stresses. The sequence is that of Probable GTP diphosphokinase RSH2, chloroplastic (RSH2) from Oryza sativa subsp. japonica (Rice).